Reading from the N-terminus, the 215-residue chain is Cytochrome b6 (215 aa).

The Cytoplasmic portion of the chain corresponds to Met1–Asn31. Residues Ile32–Phe52 form a helical membrane-spanning segment. Cys35 is a heme c binding site. Residues Ala53–Ser89 are Lumenal, thylakoid-facing. Residues Arg83, His86, His100, and Arg103 each coordinate heme b. The helical transmembrane segment at Ala90–Phe110 threads the bilayer. Topologically, residues Lys111–Glu115 are cytoplasmic. The chain crosses the membrane as a helical span at residues Leu116–Tyr136. The Lumenal, thylakoid portion of the chain corresponds to Ser137–Ser185. The chain crosses the membrane as a helical span at residues Ala186–Ile206. Heme b-binding residues include His187 and His202. Residues Arg207–Leu215 lie on the Cytoplasmic side of the membrane. Position 208 (Lys208) interacts with heme c.

The protein belongs to the cytochrome b family. PetB subfamily. As to quaternary structure, the 4 large subunits of the cytochrome b6-f complex are cytochrome b6, subunit IV (17 kDa polypeptide, PetD), cytochrome f and the Rieske protein, while the 4 small subunits are PetG, PetL, PetM and PetN. The complex functions as a dimer. It depends on heme b as a cofactor. Requires heme c as cofactor.

The protein resides in the cellular thylakoid membrane. Functionally, component of the cytochrome b6-f complex, which mediates electron transfer between photosystem II (PSII) and photosystem I (PSI), cyclic electron flow around PSI, and state transitions. The chain is Cytochrome b6 from Mastigocladus laminosus (Fischerella sp.).